The following is a 178-amino-acid chain: Large ribosomal subunit protein uL6 (178 aa).

Belongs to the universal ribosomal protein uL6 family. Part of the 50S ribosomal subunit.

This protein binds to the 23S rRNA, and is important in its secondary structure. It is located near the subunit interface in the base of the L7/L12 stalk, and near the tRNA binding site of the peptidyltransferase center. The protein is Large ribosomal subunit protein uL6 of Kocuria rhizophila (strain ATCC 9341 / DSM 348 / NBRC 103217 / DC2201).